The following is a 216-amino-acid chain: Imidazole glycerol phosphate synthase subunit HisH (216 aa).

In terms of domain architecture, Glutamine amidotransferase type-1 spans 2–216 (RVAIIDYGSG…LIANFLKWKP (215 aa)). The Nucleophile role is filled by Cys88. Residues His196 and Glu198 contribute to the active site.

Heterodimer of HisH and HisF.

The protein localises to the cytoplasm. It catalyses the reaction 5-[(5-phospho-1-deoxy-D-ribulos-1-ylimino)methylamino]-1-(5-phospho-beta-D-ribosyl)imidazole-4-carboxamide + L-glutamine = D-erythro-1-(imidazol-4-yl)glycerol 3-phosphate + 5-amino-1-(5-phospho-beta-D-ribosyl)imidazole-4-carboxamide + L-glutamate + H(+). The catalysed reaction is L-glutamine + H2O = L-glutamate + NH4(+). It participates in amino-acid biosynthesis; L-histidine biosynthesis; L-histidine from 5-phospho-alpha-D-ribose 1-diphosphate: step 5/9. In terms of biological role, IGPS catalyzes the conversion of PRFAR and glutamine to IGP, AICAR and glutamate. The HisH subunit catalyzes the hydrolysis of glutamine to glutamate and ammonia as part of the synthesis of IGP and AICAR. The resulting ammonia molecule is channeled to the active site of HisF. This chain is Imidazole glycerol phosphate synthase subunit HisH, found in Brucella suis biovar 1 (strain 1330).